Reading from the N-terminus, the 185-residue chain is Peptidyl-tRNA hydrolase (185 aa).

Tyr-14 is a tRNA binding site. His-19 acts as the Proton acceptor in catalysis. 3 residues coordinate tRNA: Tyr-65, Asn-67, and Asn-113.

It belongs to the PTH family. Monomer.

It is found in the cytoplasm. The enzyme catalyses an N-acyl-L-alpha-aminoacyl-tRNA + H2O = an N-acyl-L-amino acid + a tRNA + H(+). Its function is as follows. Hydrolyzes ribosome-free peptidyl-tRNAs (with 1 or more amino acids incorporated), which drop off the ribosome during protein synthesis, or as a result of ribosome stalling. In terms of biological role, catalyzes the release of premature peptidyl moieties from peptidyl-tRNA molecules trapped in stalled 50S ribosomal subunits, and thus maintains levels of free tRNAs and 50S ribosomes. The polypeptide is Peptidyl-tRNA hydrolase (Rickettsia bellii (strain RML369-C)).